The sequence spans 228 residues: MKSAFTLSLALVAVTATISAAADDNCSFGCLDVYKPVCGSNGETYSNSCYLRLASCKSNNGITEAGDGECASTPASSATPSPVTSSTGSTSGTVGCPDMCLDVYDPVSDENGKEYSNQCYMEMAKCKGTGYDDNKRSGNPGISTLDAERKLAFAPGYQGPPCGDMLCPDNYAPVCGSDGETYPNECDLGITSCNHPEQNITMVGEGTLPVTGAATATATATAEVVTRW.

An N-terminal signal peptide occupies residues 1–22 (MKSAFTLSLALVAVTATISAAA). 3 consecutive Kazal-like domains span residues 23-72 (DDNC…ECAS), 90-127 (TSGT…AKCK), and 156-208 (GYQG…EGTL). N-linked (GlcNAc...) asparagine glycosylation is present at Asn25. Cystine bridges form between Cys26–Cys56, Cys30–Cys49, and Cys38–Cys70. The tract at residues 69–92 (ECASTPASSATPSPVTSSTGSTSG) is disordered. The span at 71–92 (ASTPASSATPSPVTSSTGSTSG) shows a compositional bias: low complexity. Disulfide bonds link Cys96-Cys126, Cys100-Cys119, Cys162-Cys193, and Cys167-Cys186. N-linked (GlcNAc...) asparagine glycosylation is present at Asn199.

In terms of assembly, interacts with host subtilisin-like protease P69B.

Its subcellular location is the secreted. Functionally, secreted effector that interacts with and inhibits the pathogenesis-related P69B subtilisin-like serine protease of host tomato. Inhibition of host proteases by a pathogen extracellular protease inhibitor forms a specific type of defense-counterdefense mechanism between plants and microbial pathogens. The chain is Extracellular protease inhibitor 10 from Phytophthora infestans (strain T30-4) (Potato late blight agent).